The following is a 296-amino-acid chain: Tubulin polyglutamylase complex subunit 2 (296 aa).

Residues 254–265 (SKNKILIPKKKG) are compositionally biased toward basic residues. The tract at residues 254–296 (SKNKILIPKKKGPVPPASGQKGPGPLPPPTSKPTTGSGNPVRK) is disordered. Low complexity predominate over residues 285-296 (KPTTGSGNPVRK).

As to quaternary structure, part of the neuronal tubulin polyglutamylase complex which contains TPGS1, TPGS2, TTLL1, LRRC49 and NICN1. Interacts with CSTPP1 and LRRC49.

It localises to the cytoplasm. The protein localises to the cytoskeleton. Its subcellular location is the microtubule organizing center. The protein resides in the centrosome. It is found in the centriolar satellite. Its function is as follows. Subunit of the tubulin polyglutamylase complex (TPGC). The complex mediates cilia and flagella polyglutamylation which is essential for their biogenesis and motility. The polypeptide is Tubulin polyglutamylase complex subunit 2 (Tpgs2) (Mus musculus (Mouse)).